The sequence spans 109 residues: Arminin 6560 (109 aa).

Positions 1–21 (MKCLFGFLFIMLVAFLQDVHG) are cleaved as a signal peptide. The propeptide occupies 22 to 77 (VDSCIGKPCKVKGEDMKDIKEKKIEDIKEEIKNVKKEIFEDVDDELLDDNIRDDKI). Position 106 is an isoleucine amide (Ile-106).

The protein belongs to the arminin family. Expressed in the ectodermal epithelium.

It is found in the secreted. Its subcellular location is the target cell membrane. Antimicrobial peptide with a broad-spectrum antimicrobial activity. Keeps its antibacterial activity under a wide range of salt concentrations that mimic physiological conditions of human blood, which is surprising, since Hydra is an obligate freshwater animal with nearly no salt tolerance. Does not affect red blood cells. The chain is Arminin 6560 from Hydra vulgaris (Hydra).